Consider the following 1128-residue polypeptide: MMEEENTIRPHQEIRQLTLEEKKFLLAVERGDMAGTRRMLQKAQDTEYINVNCVDPLGRTALLMAIDNENLEMVELLINYNVDTKDALLHSISEEFVEAVEVLLDHENVTFHSEGNHSWESASEDTSTFTPDITPLILAAHRDNYEIIKILLDRGAVLPMPHDVRCGCDECVQSRQEDSLRHSRSRINAYRALASPSLIALSSKDPILTAFELSWELRRLSFLEHEFKNEYQELRKQCQDFATALLDHTRTSHELEILLNHDPTGPVYEHGERMHLNRLKLAIKLRQKKFVAHSNVQQLLASIWYEGLPGFRRKNMALQAVDIIRIGIMFPIFSLAYILAPYSSIGQTMRKPFIKFICHSASYFTFLFLLMLASQRIETFIGGWFFADSSGMLNTMEELPTKRGAKPTFIEWLILAWVSGLIWSEVKQLWDVGLQEYLNDMWNVIDFVTNSLYVATVALRVVSFFQVQKEMIYNSHATDLPRERWDAWDPMLISEGLFSAANIFSSLKLVYIFSVNPHLGPLQVSLSRMVMDIMKFFFLYVLVLFAFGSGLNQLLWYYADLEKKRCPEVSPMSALLNMNGTNDPNACIVWRRFSNLFETTQTLFWAVFGLIDLDSFELDGIKIFTRFWGMLMFGTYSVINIVVLLNLLIAMMNHSYQLISERADVEWKFARSKLWISYFEEGGTCPPPFNIIPTPKSIWYAIKWMRRVFCSGSSAARREHLKTIRRKAQQASDRDFKYQQIMRNLVRRYVTVEQRKAESQGVTEDDVNEIKQDISAFRCELVEILKNSGMDTNVTAGQGGGGGGKKNRQKERRLMKGFNIAPPGSTGSLAPVAEFSTSLDNYDNQHEILSSTLSTLFTPNFMHKRQQSQAGSGGGGSESPTTPTAPQGTQGAAMTASSQVTKYNKSALKPYNKRIAGHKKRWGTLIEAAKVGNVSKMLGRSKSEDSVCNSSHTSTPVHGQMRVTYAQNSPQQEYGYHGETSSTTISTPTPTISVVSNSPAAHAGVGSHFFHTTSGLTAIAALKRKRKKFSSSKNICPVTESVAAANAAEILNDKTLKRVSSYPAAEAGVQHNPAQLVKPRRHEQTQSQHDSVETNSTFTLSIDPSNTSVNSREPLISTSCVSTTGAIG.

At 1–325 (MMEEENTIRP…MALQAVDIIR (325 aa)) the chain is on the cytoplasmic side. ANK repeat units follow at residues 57–86 (LGRT…DTKD) and 131–160 (PDIT…VLPM). A helical transmembrane segment spans residues 326–346 (IGIMFPIFSLAYILAPYSSIG). The Extracellular portion of the chain corresponds to 347-403 (QTMRKPFIKFICHSASYFTFLFLLMLASQRIETFIGGWFFADSSGMLNTMEELPTKR). Residues 404-424 (GAKPTFIEWLILAWVSGLIWS) form a helical membrane-spanning segment. The Cytoplasmic segment spans residues 425-444 (EVKQLWDVGLQEYLNDMWNV). Residues 445–465 (IDFVTNSLYVATVALRVVSFF) form a helical membrane-spanning segment. The Extracellular segment spans residues 466–492 (QVQKEMIYNSHATDLPRERWDAWDPML). Residues 493–513 (ISEGLFSAANIFSSLKLVYIF) traverse the membrane as a helical segment. Residues 514–535 (SVNPHLGPLQVSLSRMVMDIMK) are Cytoplasmic-facing. The helical transmembrane segment at 536–556 (FFFLYVLVLFAFGSGLNQLLW) threads the bilayer. Over 557–629 (YYADLEKKRC…GIKIFTRFWG (73 aa)) the chain is Extracellular. The chain crosses the membrane as a helical span at residues 630–650 (MLMFGTYSVINIVVLLNLLIA). Over 651-1128 (MMNHSYQLIS…SCVSTTGAIG (478 aa)) the chain is Cytoplasmic. Disordered regions lie at residues 865–898 (RQQS…TASS) and 1064–1111 (AAEA…SVNS). A compositionally biased stretch (low complexity) spans 878 to 893 (ESPTTPTAPQGTQGAA). A compositionally biased stretch (polar residues) spans 1085-1111 (TQSQHDSVETNSTFTLSIDPSNTSVNS).

This sequence belongs to the transient receptor (TC 1.A.4) family. STrpC subfamily. As to quaternary structure, interacts preferentially with trpl and interacts to a lower extent with trp. Expressed predominantly in the rhabdomeres of photoreceptor cells.

It is found in the cell projection. Its subcellular location is the rhabdomere membrane. Functionally, a light-sensitive calcium channel that is required for inositide-mediated Ca(2+) entry in the retina during phospholipase C (PLC)-mediated phototransduction. Forms a regulated cation channel when heteromultimerized with trpl. This chain is Transient receptor potential-gamma protein (Trpgamma), found in Drosophila melanogaster (Fruit fly).